The chain runs to 162 residues: uncharacterized protein (162 aa).

The protein localises to the cytoplasm. Its subcellular location is the nucleus. This is an uncharacterized protein from Schizosaccharomyces pombe (strain 972 / ATCC 24843) (Fission yeast).